Here is a 221-residue protein sequence, read N- to C-terminus: Ribonuclease 3 (221 aa).

An RNase III domain is found at 4 to 121 (LEQLEKKLGY…LWAAVYIDSG (118 aa)). A Mg(2+)-binding site is contributed by Glu40. Residue Asp44 is part of the active site. Positions 107 and 110 each coordinate Mg(2+). Residue Glu110 is part of the active site. Residues 151–219 (DYKTILQEIT…AEELIKLLEE (69 aa)) enclose the DRBM domain.

Belongs to the ribonuclease III family. Homodimer. Requires Mg(2+) as cofactor.

It is found in the cytoplasm. The enzyme catalyses Endonucleolytic cleavage to 5'-phosphomonoester.. In terms of biological role, digests double-stranded RNA. Involved in the processing of primary rRNA transcript to yield the immediate precursors to the large and small rRNAs (23S and 16S). Also processes some mRNAs, and tRNAs when they are encoded in the rRNA operon. Probably processes pre-crRNA and tracrRNA of type II CRISPR loci if present in the organism. The chain is Ribonuclease 3 (rnc) from Aquifex aeolicus (strain VF5).